The primary structure comprises 43 residues: Augerpeptide hhe9.2 (43 aa).

Positions 2–40 (EEVGCFPNVCKNDGNCSIETSTGMTRCQCLEGYTGHVCE) constitute an EGF-like domain. 3 disulfide bridges follow: Cys6–Cys28, Cys11–Cys30, and Cys17–Cys39.

Expressed by the venom duct.

It localises to the secreted. This is Augerpeptide hhe9.2 from Hastula hectica (Sea snail).